Consider the following 1462-residue polypeptide: MDPRKNLASVGTMPEQERQVTAKEASRKILSKLALPGRPWEQSMKQSFAFDNVGYEGGLDSTSSSPAATDVVNILGMTCHSCVKSIEDRISSLKGIVNIKVSLEQGSATVRYVPSVMNLQQICLQIEDMGFEASAAEGKAASWPSRSSPAQEAVVKLRVEGMTCQSCVSSIEGKIRKLQGVVRIKVSLSNQEAVITYQPYLIQPEDLRDHICDMGFEAAIKNRTAPLRLGPIDVNKLESTNLKKETVSPVQISNHFETLGHQGSYLATLPLRIDGMHCKSCVLNIEGNIGQLPGVQNIHVSLENKTAQIQYDPSCVTPMFLQTAIEALPPGHFKVSLPDGVEENEPQSGSSQRHQEQGPGRTAVLTISGITCASSVQPIEDMLSQRKGVQQTSISLAEGTGAVLYDPSIVSLDELRTAVEDMGFEVSVNSETFTINPVRNFKSGNSVPQTMGDIAGSVQKMAPDTRGLPTHQGPGHSSETPSSPGATASQKCFVQIKGMTCASCVSNIERSLQRHAGILSVLVALMSGKAEVKYDPEIIQSPRIAQLIQDLGFEASVMEDNTVSEGDIELIITGMTCASCVHNIESKLTRTNGITYASVALATSKAHVKFDPEIVGPRDIIKIIEEIGFHASLAQRNPNAHHLDHKTEIKQWKKSFLCSLVFGIPVMGLMVYMLIPSSTPQETMVLDHNIIPGLSVLNLIFFILCTFVQFLGGWYFYVQAYKSLRHRSANMDVLIVLATTIAYAYSLVILVVAVAEKAEKSPVTFFDTPPMLFVFIALGRWLEHVAKSKTSEALAKLMSLQATEATVVTLGEDNLILREEQVPMELVQRGDVIKVVPGGKFPVDGKVLEGNTMADESLITGEAMPVTKKPGSIVIAGSINAHGSVLLKATHVGNDTTLAQIVKLVEEAQMSKAPIQQLADRFSGYFVPFIIIISTLTLVVWIVIGFVDFGVVQKYFPSPSKHISQTEVIIRFAFQTSITVLCIACPCSLGLATPTAVMVGTGVAAQNGVLIKGGKPLEMAHKIKTVMFDKTGTITHGVPRVMRFLLLADVATLPLRKVLAVVGTAEASSEHPLGVAVTKYCKEELGTETLGYSTDFQAVPGCGISCKVSNVEGILARSDLTAHPVGVGNPPTGEGAGPQTFSVLIGNREWMRRNGLTISSDISDAMTDHEMKGQTAILVAIDGVLCGMIAIADAVKPEAALAIYTLKSMGVDVALITGDNRKTARAIATQVGINKVFAEVLPSHKVAKVQELQNEGKKVAMVGDGVNDSPALAQADVGIAIGTGTDVAIEAADVVLIRNDLLDVVASIHLSKRTVRRIRVNLVLALIYNMVGIPIAAGVFMPIGIVLQPWMGSAAMAASSVSVVLSSLQLKCYRKPDLERYEAQAHGRMKPLSASQVSVHIGMDDRRRDSPRATAWDQVSYVSQVSLSSLTSDRLSRHGGAAEDGGDKWSLLLSDRDEEQCI.

Residues 1 to 23 (MDPRKNLASVGTMPEQERQVTAK) are disordered. Over 1–655 (MDPRKNLASV…KTEIKQWKKS (655 aa)) the chain is Cytoplasmic. HMA domains follow at residues 68 to 134 (ATDV…FEAS), 153 to 219 (AVVK…FEAA), 267 to 333 (ATLP…PGHF), and 361 to 427 (RTAV…FEVS). Cu(+) contacts are provided by Cys-79, Cys-82, Cys-164, Cys-167, Cys-278, and Cys-281. The interval 333-361 (FKVSLPDGVEENEPQSGSSQRHQEQGPGR) is disordered. Residue Cys-372 participates in Cu(+) binding. Residues 460–487 (KMAPDTRGLPTHQGPGHSSETPSSPGAT) form a disordered region. A compositionally biased stretch (polar residues) spans 475-487 (GHSSETPSSPGAT). 2 positions are modified to phosphoserine: Ser-478 and Ser-483. 2 HMA domains span residues 490–556 (QKCF…FEAS) and 566–632 (GDIE…FHAS). Cu(+) contacts are provided by Cys-501, Cys-504, Cys-577, and Cys-580. The helical transmembrane segment at 656–677 (FLCSLVFGIPVMGLMVYMLIPS) threads the bilayer. Topologically, residues 678–699 (STPQETMVLDHNIIPGLSVLNL) are extracellular. A helical transmembrane segment spans residues 700–719 (IFFILCTFVQFLGGWYFYVQ). At 720–726 (AYKSLRH) the chain is on the cytoplasmic side. The helical transmembrane segment at 727-747 (RSANMDVLIVLATTIAYAYSL) threads the bilayer. Over 748–766 (VILVVAVAEKAEKSPVTFF) the chain is Extracellular. Residues 767–787 (DTPPMLFVFIALGRWLEHVAK) form a helical membrane-spanning segment. The Cytoplasmic segment spans residues 788-921 (SKTSEALAKL…KAPIQQLADR (134 aa)). Residues 922–944 (FSGYFVPFIIIISTLTLVVWIVI) form a helical membrane-spanning segment. Topologically, residues 945–974 (GFVDFGVVQKYFPSPSKHISQTEVIIRFAF) are extracellular. A helical transmembrane segment spans residues 975–996 (QTSITVLCIACPCSLGLATPTA). The Cytoplasmic portion of the chain corresponds to 997 to 1319 (VMVGTGVAAQ…LSKRTVRRIR (323 aa)). The active-site 4-aspartylphosphate intermediate is the Asp-1029. Residues Asp-1264 and Asp-1268 each coordinate Mg(2+). The chain crosses the membrane as a helical span at residues 1320 to 1337 (VNLVLALIYNMVGIPIAA). The Extracellular segment spans residues 1338–1348 (GVFMPIGIVLQ). The helical transmembrane segment at 1349 to 1368 (PWMGSAAMAASSVSVVLSSL) threads the bilayer. The Cytoplasmic portion of the chain corresponds to 1369–1462 (QLKCYRKPDL…LSDRDEEQCI (94 aa)). Ser-1395 and Ser-1454 each carry phosphoserine.

This sequence belongs to the cation transport ATPase (P-type) (TC 3.A.3) family. Type IB subfamily. As to quaternary structure, monomer. Interacts with COMMD1/MURR1. Interacts with DCTN4, in a copper-dependent manner. Interacts with ATOX1. Interacts (via C-terminus) with ZBTB16/PLZF. As to expression, detected in liver and kidney.

It is found in the golgi apparatus. It localises to the trans-Golgi network membrane. The protein resides in the late endosome. It catalyses the reaction Cu(+)(in) + ATP + H2O = Cu(+)(out) + ADP + phosphate + H(+). Copper ion transmembrane transporter involved in the export of copper out of the cells, such as the efflux of hepatic copper into the bile. This Mus musculus (Mouse) protein is Copper-transporting ATPase 2 (Atp7b).